The primary structure comprises 132 residues: Myelin P2 protein (132 aa).

S2 is subject to N-acetylserine. R107 contributes to the (9Z)-octadecenoate binding site. R107 is a hexadecanoate binding site. Cysteines 118 and 125 form a disulfide. 127-129 contacts (9Z)-octadecenoate; it reads RIY. 127–129 is a binding site for hexadecanoate; it reads RIY.

Belongs to the calycin superfamily. Fatty-acid binding protein (FABP) family. In terms of assembly, monomer.

The protein resides in the cytoplasm. May play a role in lipid transport protein in Schwann cells. May bind cholesterol. The protein is Myelin P2 protein (PMP2) of Bos taurus (Bovine).